A 509-amino-acid chain; its full sequence is Probable cation transporter HKT2;3 (509 aa).

Over 1–32 (MPIRLHIFVNSARHAINSSAFICRFIAYHLSP) the chain is Cytoplasmic. 2 helical membrane-spanning segments follow: residues 33 to 53 (LLIHLSYFLIIDILGFVSLVV) and 96 to 116 (ILTLLMFLDSKMFLSFLGLVL). The Cytoplasmic portion of the chain corresponds to 117–164 (ESSKQNKHDPENRRVSSVTVCKQSQLEEATPQTPSMNSIDIKKRCLKY). 2 helical membrane passes run 165 to 185 (LVFVVLAYMIIILVTGSLLVF) and 237 to 257 (GLLLLLIGQILAGSTLFPVFL). Residues 258-296 (RLVIWALRGLRLAKAEEPDFMMNNSSAVGFSHLLPNLQT) lie on the Cytoplasmic side of the membrane. The next 2 membrane-spanning stretches (helical) occupy residues 297 to 317 (IFLAVVEVAFVAMTVILFCCL) and 353 to 373 (CSLVAPAALVLFMVMMYTPSL). At 374-400 (TKLFSACQDHKRIGPESDDRTSKGKPF) the chain is on the cytoplasmic side. The next 2 helical transmembrane spans lie at 401-421 (LKMMAFSPLGFNTTVIMLVCI) and 474-494 (AYNFSGWWSEPGKLILVLAML). Residues 495-509 (CGRLNSKDSTSARTR) lie on the Cytoplasmic side of the membrane.

It belongs to the TrkH potassium transport family. HKT (TC 2.A.38.3) subfamily.

The protein resides in the membrane. Its function is as follows. Probable cation transporter. May be involved in regulation of potassium-sodium homeostasis. The chain is Probable cation transporter HKT2;3 from Oryza sativa subsp. japonica (Rice).